The sequence spans 117 residues: Immunoglobulin lambda variable 10-54 (117 aa).

A signal peptide spans 1-21 (MPWALLLLTLLTHSAVSVVQA). Residues 20-43 (QAGLTQPPSVSKGLRQTATLTCTG) form a framework-1 region. One can recognise an Ig-like domain in the interval 22-117 (GLTQPPSVSK…CSALDSSLSA (96 aa)). The cysteines at positions 41 and 108 are disulfide-linked. The segment at 44-52 (NSNIVGNQG) is complementarity-determining-1. The framework-2 stretch occupies residues 53–69 (AAWLQQHQGHPPKLLSY). Positions 70-72 (RNN) are complementarity-determining-2. Residues 73 to 108 (NRPSGISERFSASRSGNTASLTITGLQPEDEADYYC) are framework-3. Positions 109 to 117 (SALDSSLSA) are complementarity-determining-3.

As to quaternary structure, immunoglobulins are composed of two identical heavy chains and two identical light chains; disulfide-linked.

The protein resides in the secreted. Its subcellular location is the cell membrane. In terms of biological role, v region of the variable domain of immunoglobulin light chains that participates in the antigen recognition. Immunoglobulins, also known as antibodies, are membrane-bound or secreted glycoproteins produced by B lymphocytes. In the recognition phase of humoral immunity, the membrane-bound immunoglobulins serve as receptors which, upon binding of a specific antigen, trigger the clonal expansion and differentiation of B lymphocytes into immunoglobulins-secreting plasma cells. Secreted immunoglobulins mediate the effector phase of humoral immunity, which results in the elimination of bound antigens. The antigen binding site is formed by the variable domain of one heavy chain, together with that of its associated light chain. Thus, each immunoglobulin has two antigen binding sites with remarkable affinity for a particular antigen. The variable domains are assembled by a process called V-(D)-J rearrangement and can then be subjected to somatic hypermutations which, after exposure to antigen and selection, allow affinity maturation for a particular antigen. The polypeptide is Immunoglobulin lambda variable 10-54 (Homo sapiens (Human)).